A 731-amino-acid polypeptide reads, in one-letter code: Catalase-peroxidase (731 aa).

Residues 98–227 (WHAAGTYRTA…LAAIQMGLIY (130 aa)) constitute a cross-link (tryptophyl-tyrosyl-methioninium (Trp-Tyr) (with M-254)). The active-site Proton acceptor is His99. The segment at residues 227 to 254 (YVNPEGPQGNPHDDEGMARDMKETFKRM) is a cross-link (tryptophyl-tyrosyl-methioninium (Tyr-Met) (with W-98)). Position 269 (His269) interacts with heme b.

The protein belongs to the peroxidase family. Peroxidase/catalase subfamily. Homodimer or homotetramer. Heme b serves as cofactor. Post-translationally, formation of the three residue Trp-Tyr-Met cross-link is important for the catalase, but not the peroxidase activity of the enzyme.

It carries out the reaction H2O2 + AH2 = A + 2 H2O. The enzyme catalyses 2 H2O2 = O2 + 2 H2O. Functionally, bifunctional enzyme with both catalase and broad-spectrum peroxidase activity. This chain is Catalase-peroxidase, found in Sphingopyxis alaskensis (strain DSM 13593 / LMG 18877 / RB2256) (Sphingomonas alaskensis).